The sequence spans 233 residues: Triosephosphate isomerase (233 aa).

8-10 (NWK) contributes to the substrate binding site. Catalysis depends on H91, which acts as the Electrophile. E155 serves as the catalytic Proton acceptor. Substrate is bound by residues G161 and S192.

The protein belongs to the triosephosphate isomerase family. As to quaternary structure, homodimer.

It is found in the cytoplasm. It carries out the reaction D-glyceraldehyde 3-phosphate = dihydroxyacetone phosphate. The protein operates within carbohydrate biosynthesis; gluconeogenesis. Its pathway is carbohydrate degradation; glycolysis; D-glyceraldehyde 3-phosphate from glycerone phosphate: step 1/1. Involved in the gluconeogenesis. Catalyzes stereospecifically the conversion of dihydroxyacetone phosphate (DHAP) to D-glyceraldehyde-3-phosphate (G3P). This is Triosephosphate isomerase from Wolbachia sp. subsp. Brugia malayi (strain TRS).